The chain runs to 478 residues: GDP-fucose protein O-fucosyltransferase 3 (478 aa).

The Cytoplasmic portion of the chain corresponds to 1–9 (MVRIQRGKL). The chain crosses the membrane as a helical; Signal-anchor for type II membrane protein span at residues 10–30 (LAFCLCVMATVFLLITLQVVV). Over 31 to 478 (ELGKFEGKKF…QEFWALVFKD (448 aa)) the chain is Lumenal. N-linked (GlcNAc...) asparagine glycans are attached at residues Asn-110 and Asn-168. Residues Cys-389 and Cys-392 are joined by a disulfide bond.

This sequence belongs to the glycosyltransferase 10 family.

The protein localises to the endoplasmic reticulum membrane. The catalysed reaction is L-threonyl-[protein] + GDP-beta-L-fucose = 3-O-(alpha-L-fucosyl)-L-threonyl-[protein] + GDP + H(+). The enzyme catalyses L-seryl-[protein] + GDP-beta-L-fucose = 3-O-(alpha-L-fucosyl)-L-seryl-[protein] + GDP + H(+). It functions in the pathway protein modification; protein glycosylation. Protein O-fucosyltransferase that specifically catalyzes O-fucosylation of serine or threonine residues in EMI domains of target proteins, such as MMRN1, MMRN2 and EMID1. Attaches fucose through an O-glycosidic linkage. O-fucosylation of EMI domain-containing proteins may be required for facilitating protein folding and secretion. May also show alpha-(1,3)-fucosyltransferase activity toward the innermost N-acetyl glucosamine (GlcNAc) residue in biantennary N-glycan acceptors. However, this was tested with a library of synthetic substrates and this activity is unsure in vivo. May be involved in biosynthesis of Lewis X-carrying biantennary N-glycans that regulate neuron stem cell self-renewal during brain development. The chain is GDP-fucose protein O-fucosyltransferase 3 (FUT10) from Bos taurus (Bovine).